The chain runs to 530 residues: Rho GTPase-activating protein 36 (530 aa).

An N-terminal signal peptide occupies residues 1-19; the sequence is MPPLLLLSALIFLVNVLGG. In terms of domain architecture, Rho-GAP spans 209 to 409; the sequence is MSLNPIAKQI…AMIDNWDVLF (201 aa). Residues 471-512 form a disordered region; the sequence is GQSKPFDEGSSEEPAVPPGTARSHDDEEGAGNPLILEQDRPL.

As to quaternary structure, may interacts (via the Rho-GAP domain) with the active form of RAC1.

GTPase activator for the Rho-type GTPases by converting them to an inactive GDP-bound state. The chain is Rho GTPase-activating protein 36 (ARHGAP36) from Bos taurus (Bovine).